Consider the following 413-residue polypeptide: Transmembrane protein 237B (413 aa).

The tract at residues 1–162 (MDPEAKVSSS…EDDDVITDPQ (162 aa)) is disordered. Positions 112–122 (DLVSNGDTLDQ) are enriched in polar residues. Helical transmembrane passes span 233–253 (VIGL…IIVV), 274–294 (LAYP…VSAF), 312–332 (LSPV…SLSQ), and 360–380 (ILYP…LAWI).

Belongs to the TMEM237 family.

Its subcellular location is the membrane. It localises to the cell projection. The protein resides in the cilium. Component of the transition zone in primary cilia. Required for ciliogenesis. The sequence is that of Transmembrane protein 237B (tmem237b) from Danio rerio (Zebrafish).